We begin with the raw amino-acid sequence, 404 residues long: Methionine aminopeptidase 1D, mitochondrial (404 aa).

The transit peptide at M1–Y58 directs the protein to the mitochondrion. The segment at V86 to K109 is disordered. H232 contacts substrate. A divalent metal cation is bound by residues D249, D260, and H323. H330 contributes to the substrate binding site. A divalent metal cation contacts are provided by E355 and E389.

Belongs to the peptidase M24A family. Methionine aminopeptidase type 1 subfamily. Co(2+) is required as a cofactor. Requires Zn(2+) as cofactor. The cofactor is Mn(2+). It depends on Fe(2+) as a cofactor.

It localises to the mitochondrion. It carries out the reaction Release of N-terminal amino acids, preferentially methionine, from peptides and arylamides.. Removes the N-terminal methionine from nascent proteins. The N-terminal methionine is often cleaved when the second residue in the primary sequence is small and uncharged (Met-Ala-, Cys, Gly, Pro, Ser, Thr, or Val). The protein is Methionine aminopeptidase 1D, mitochondrial (metap1d) of Dictyostelium discoideum (Social amoeba).